Reading from the N-terminus, the 839-residue chain is Heat shock 70 kDa protein 4L (839 aa).

Ser74 and Ser508 each carry phosphoserine. Positions Leu503 to Gly554 are enriched in basic and acidic residues. Residues Leu503–Arg567 form a disordered region. Thr545 is modified (phosphothreonine). At Ser579 the chain carries Phosphoserine. Thr761 carries the phosphothreonine modification. Residues Ile786–Asp839 form a disordered region. Basic and acidic residues-rich tracts occupy residues Pro791 to Ser804 and Thr818 to Asp839.

This sequence belongs to the heat shock protein 70 family. Homodimer.

Its subcellular location is the cytoplasm. It is found in the nucleus. Functionally, possesses chaperone activity in vitro where it inhibits aggregation of citrate synthase. This chain is Heat shock 70 kDa protein 4L (HSPA4L), found in Homo sapiens (Human).